A 651-amino-acid chain; its full sequence is DNA endonuclease RBBP8 (651 aa).

2 coiled-coil regions span residues 35–84 (LQEL…EDRL) and 117–138 (ISEL…SLEL). 3 disordered regions span residues 138 to 199 (LERL…PESR), 363 to 433 (NGRL…EHQA), and 487 to 539 (YESC…SDKS). The span at 363–379 (NGRLQSKNQETSEIETT) shows a compositional bias: polar residues. Positions 380-391 (QDSKKKCLDGHT) are enriched in basic and acidic residues. The segment covering 503–515 (VYEEEREEDDPEE) has biased composition (acidic residues). Residues 525 to 539 (RPADRKPLVSDSDKS) show a composition bias toward basic and acidic residues. 2 positions are modified to phosphothreonine: Thr599 and Thr611.

It belongs to the COM1/SAE2/CtIP family. In terms of assembly, homotetramer; formed by antiparallel association of helical extensions protruding from the N-termini of two parallel coiled-coil dimers. Interacts with the MRN complex; the interaction links DNA sensing to resection. Interacts with samhd1. Post-translationally, phosphorylation at Thr-599 and Thr-611 promote interaction with nbn and recruitment to double-strand breaks (DSBs).

Its subcellular location is the nucleus. It localises to the chromosome. In terms of biological role, endonuclease that cooperates with the MRE11-RAD50-NBN (MRN) complex in DNA-end resection, the first step of double-strand break (DSB) repair through the homologous recombination (HR) pathway. Functions downstream of the MRN complex and ATM, promotes ATR activation and its recruitment to DSBs in the S/G2 phase facilitating the generation of ssDNA. Specifically promotes the endonuclease activity of the MRN complex to clear DNA ends containing protein adducts: recruited to DSBs by nbn following phosphorylation, and promotes the endonuclease of mre11 to clear protein-DNA adducts and generate clean double-strand break ends. This chain is DNA endonuclease RBBP8 (rbbp8), found in Danio rerio (Zebrafish).